The chain runs to 40 residues: Large ribosomal subunit protein bL36B (40 aa).

This sequence belongs to the bacterial ribosomal protein bL36 family.

In Streptomyces coelicolor (strain ATCC BAA-471 / A3(2) / M145), this protein is Large ribosomal subunit protein bL36B.